Here is a 485-residue protein sequence, read N- to C-terminus: dTDP-4-amino-4,6-dideoxy-D-glucose ammonia-lyase (485 aa).

[4Fe-4S] cluster is bound by residues Cys141, Cys145, and Cys148.

It belongs to the radical SAM superfamily. DesII family. As to quaternary structure, monomer. [4Fe-4S] cluster is required as a cofactor.

It catalyses the reaction dTDP-4-amino-4,6-dideoxy-alpha-D-glucose + AH2 + S-adenosyl-L-methionine = dTDP-3-dehydro-4,6-dideoxy-alpha-D-glucose + 5'-deoxyadenosine + L-methionine + A + NH4(+) + H(+). Its function is as follows. Involved in the biosynthesis of dTDP-alpha-D-desosamine, a sugar found in several bacterial macrolide antibiotics. Catalyzes the SAM-dependent deamination of dTDP-4-amino-4,6-deoxyglucose (dTDP-viosamine) to yield dTDP-3-keto-4,6-deoxyglucose. It can also catalyze the oxidative dehydrogenation of the non-physiological substrate dTDP-D-quinovose to dTDP-3-keto-6-deoxy-d-glucose. It can also deaminate dTDP-3-amino-3,6-deoxyglucose. This Streptomyces venezuelae protein is dTDP-4-amino-4,6-dideoxy-D-glucose ammonia-lyase.